A 2256-amino-acid polypeptide reads, in one-letter code: Death-inducer obliterator 1 (2256 aa).

Methionine 1 carries the post-translational modification N-acetylmethionine. The segment covering 1 to 25 has biased composition (basic and acidic residues); sequence MDDKGHLSNEEAPKAIKPTSKEFRK. The disordered stretch occupies residues 1–256; sequence MDDKGHLSNE…NPREAGKPKP (256 aa). Polar residues-rich tracts occupy residues 48–59 and 96–119; these read SEQQPQQHNLSL and EPTSSTVTDVETASEGSVESSSEI. A phosphoserine mark is found at serine 58 and serine 112. Residues 128–142 show a composition bias toward basic and acidic residues; the sequence is LGKEHPASSEKAKGG. Residues 143–153 are compositionally biased toward acidic residues; it reads EEEEDTSDSDS. Threonine 148 is modified (phosphothreonine). Serine 149 and serine 151 each carry phosphoserine. 2 short sequence motifs (nuclear localization signal) span residues 162 to 170 and 182 to 190; these read QNRLRRKRE and QNRLRKKRR. The segment covering 169–178 has biased composition (basic and acidic residues); the sequence is REQEPVERSL. Composition is skewed to basic and acidic residues over residues 206–216 and 246–256; these read EQDRPLCKQEP and ENPREAGKPKP. The PHD-type zinc finger occupies 265 to 319; sequence ALYCICRQPHNNRFMICCDRCEEWFHGDCVGISEARGRLLERNGEDYICPNCTIL. 7 disordered regions span residues 481-535, 598-624, 641-668, 778-822, 856-970, 1011-1039, and 1197-1218; these read LASR…DDRR, RPWPSATLSGTSARQAGPTPMTAASKK, ANVPAASPAPGRLGPVSPAPSQPNSQIR, SRTK…PEKS, QVPS…TALS, AKPSSSPDPRYLSVPPSPSISESRSPPEG, and PSSAGELDKTDEKRTRLQQEEL. Residues 495-506 are compositionally biased toward polar residues; the sequence is ESSTPSWASDHN. At serine 522 the chain carries Phosphoserine. The TFIIS central domain maps to 667–787; sequence IRQNIRRSLK…SRTKLLNESK (121 aa). The span at 778-788 shows a compositional bias: basic and acidic residues; sequence SRTKLLNESKK. Over residues 797 to 812 the composition is skewed to acidic residues; it reads PDMEDSPPVSDSEEQQ. Phosphoserine is present on residues serine 802 and serine 806. 2 stretches are compositionally biased toward basic and acidic residues: residues 875 to 886 and 921 to 935; these read SKKEDFKPRHDS and QERKCFPESPGDSHP. A Glycyl lysine isopeptide (Lys-Gly) (interchain with G-Cter in SUMO2) cross-link involves residue lysine 876. The residue at position 886 (serine 886) is a Phosphoserine. Over residues 937–962 the composition is skewed to low complexity; that stretch reads PSSLGGLSPSSASGGSGVVTTVTMSG. Serine 1016, serine 1027, and serine 1035 each carry phosphoserine. Over residues 1202–1215 the composition is skewed to basic and acidic residues; the sequence is ELDKTDEKRTRLQQ. Tyrosine 1239 carries the phosphotyrosine modification. The disordered stretch occupies residues 1245–1288; that stretch reads DTAATSTTPPGSPPPPPPLPEPPVLKILSSLKPGSTSTVTAPTT. Threonine 1252 carries the phosphothreonine modification. The span at 1254–1267 shows a compositional bias: pro residues; that stretch reads PGSPPPPPPLPEPP. Position 1256 is a phosphoserine (serine 1256). The segment covering 1279-1288 has biased composition (low complexity); that stretch reads STSTVTAPTT. At serine 1307 the chain carries Phosphoserine. Disordered stretches follow at residues 1320–1347, 1362–1421, 1509–1609, and 1630–2256; these read KKSFEPSGKESVGSTLSPHQDSKAKGED, FGQF…VAYD, SDAL…EAKE, and QKCE…AAQA. A compositionally biased stretch (acidic residues) spans 1371 to 1387; the sequence is LEEEEEDDRPYDPEEEY. Serine 1514 is subject to Phosphoserine. Residues 1526–1546 are compositionally biased toward polar residues; it reads LFSQEQQAPDPSQGAPNTNHN. The span at 1547–1557 shows a compositional bias: basic and acidic residues; the sequence is LDSRQSRDPRQ. Over residues 1649 to 1666 the composition is skewed to low complexity; it reads PTAGDGAARPAPPRRVLL. Over residues 1667 to 1679 the composition is skewed to pro residues; the sequence is PTPPSTTFPPSFP. The span at 1699 to 1712 shows a compositional bias: polar residues; sequence TFMSQETSLGSSQY. Serine 1726 is subject to Phosphoserine. A compositionally biased stretch (pro residues) spans 1783–1792; sequence FPGPRGPVPP. Arginine 1848 is modified (omega-N-methylarginine). Positions 1855-1869 are enriched in basic and acidic residues; it reads FEDRKDPHGEKREFQ. An asymmetric dimethylarginine mark is found at arginine 1904, arginine 1905, arginine 1988, arginine 1993, arginine 2004, arginine 2019, and arginine 2035. Composition is skewed to basic and acidic residues over residues 2081–2113 and 2123–2246; these read EFREGKGHEYRSPAFEGRQRERFEAGSKEKPLD and RQGR…EART.

Interacts specifically (via PHD-type zinc finger) with histone H3 that is trimethylated at 'Lys-4' (H3K4me3), histone phosphorylation at 'Thr-3' or 'Thr-6' disrupts this binding and promotes translocation of DIDO1 from chromatin to the mitotic spindle during mitosis. Ubiquitous. Expressed at intermediate levels.

The protein resides in the cytoplasm. It localises to the nucleus. Its subcellular location is the cytoskeleton. The protein localises to the spindle. In terms of biological role, required for early embryonic stem cell development. Putative transcription factor, weakly pro-apoptotic when overexpressed. The polypeptide is Death-inducer obliterator 1 (Dido1) (Mus musculus (Mouse)).